Reading from the N-terminus, the 175-residue chain is Adenine phosphoribosyltransferase (175 aa).

This sequence belongs to the purine/pyrimidine phosphoribosyltransferase family. In terms of assembly, homodimer.

Its subcellular location is the cytoplasm. It catalyses the reaction AMP + diphosphate = 5-phospho-alpha-D-ribose 1-diphosphate + adenine. The protein operates within purine metabolism; AMP biosynthesis via salvage pathway; AMP from adenine: step 1/1. Its function is as follows. Catalyzes a salvage reaction resulting in the formation of AMP, that is energically less costly than de novo synthesis. The sequence is that of Adenine phosphoribosyltransferase from Lactobacillus gasseri (strain ATCC 33323 / DSM 20243 / BCRC 14619 / CIP 102991 / JCM 1131 / KCTC 3163 / NCIMB 11718 / NCTC 13722 / AM63).